The following is a 256-amino-acid chain: Myeloblastin (256 aa).

Positions 1-25 (MAHRPPSPALASVLLALLLSGAARA) are cleaved as a signal peptide. Residues 26–27 (AE) constitute a propeptide that is removed on maturation. The Peptidase S1 domain occupies 28 to 248 (IVGGHEAQPH…YVDWIRSTLR (221 aa)). Cysteines 56 and 72 form a disulfide. Catalysis depends on charge relay system residues His71 and Asp118. N-linked (GlcNAc...) asparagine glycans are attached at residues Asn129 and Asn174. 3 disulfides stabilise this stretch: Cys152/Cys209, Cys182/Cys188, and Cys199/Cys224. Catalysis depends on Ser203, which acts as the Charge relay system. A propeptide spanning residues 249–256 (RVEAKGRP) is cleaved from the precursor.

It belongs to the peptidase S1 family. Elastase subfamily. May form dimers. Interacts with CD177; the interaction tethers PRTN3 to the cell surface; the interaction is direct. Interacts with SERPINB1. Interacts with ADGRG3. Expressed in polymorphonuclear leukocytes (at protein level). Expressed in neutrophils (at protein level). Expressed in differentiating neutrophils.

Its subcellular location is the cytoplasmic granule. The protein localises to the secreted. It is found in the cell membrane. It localises to the membrane raft. It catalyses the reaction Hydrolysis of proteins, including elastin, by preferential cleavage: -Ala-|-Xaa- &gt; -Val-|-Xaa-.. Its activity is regulated as follows. Inhibited by phenylmethanesulfonyl fluoride (PMSF) and diisopropyl fluorophosphate (DFP). Serine protease that degrades elastin, fibronectin, laminin, vitronectin, and collagen types I, III, and IV (in vitro). By cleaving and activating receptor F2RL1/PAR-2, enhances endothelial cell barrier function and thus vascular integrity during neutrophil transendothelial migration. Plays a role in neutrophil transendothelial migration, probably when associated with CD177. Triggers inflammatory processes in neutrophils by interacting with ADGRG3 upstream of F2RL1/PAR2 activation. This Homo sapiens (Human) protein is Myeloblastin (PRTN3).